The primary structure comprises 54 residues: Large ribosomal subunit protein bL33 (54 aa).

Belongs to the bacterial ribosomal protein bL33 family.

The polypeptide is Large ribosomal subunit protein bL33 (Corynebacterium diphtheriae (strain ATCC 700971 / NCTC 13129 / Biotype gravis)).